A 104-amino-acid polypeptide reads, in one-letter code: Large ribosomal subunit protein uL24 (104 aa).

It belongs to the universal ribosomal protein uL24 family. As to quaternary structure, part of the 50S ribosomal subunit.

One of two assembly initiator proteins, it binds directly to the 5'-end of the 23S rRNA, where it nucleates assembly of the 50S subunit. Its function is as follows. One of the proteins that surrounds the polypeptide exit tunnel on the outside of the subunit. This chain is Large ribosomal subunit protein uL24, found in Flavobacterium psychrophilum (strain ATCC 49511 / DSM 21280 / CIP 103535 / JIP02/86).